Reading from the N-terminus, the 251-residue chain is Probable phosphatase Sputw3181_2734 (251 aa).

9 residues coordinate Zn(2+): H8, H10, H16, H41, E74, H102, H132, D193, and H195.

The protein belongs to the PHP family. Zn(2+) is required as a cofactor.

The sequence is that of Probable phosphatase Sputw3181_2734 from Shewanella sp. (strain W3-18-1).